A 281-amino-acid polypeptide reads, in one-letter code: Fructose-bisphosphate aldolase class 1 (281 aa).

The active-site Schiff-base intermediate with dihydroxyacetone-P is K191.

The protein belongs to the DeoC/FbaB aldolase family. As to quaternary structure, homooctamer.

The protein localises to the cytoplasm. The enzyme catalyses beta-D-fructose 1,6-bisphosphate = D-glyceraldehyde 3-phosphate + dihydroxyacetone phosphate. Its activity is regulated as follows. Activated by citrate. In Pyrococcus abyssi (strain GE5 / Orsay), this protein is Fructose-bisphosphate aldolase class 1 (fba).